Reading from the N-terminus, the 175-residue chain is uncharacterized protein (175 aa).

The segment covering 1–17 has biased composition (basic and acidic residues); it reads MKVEGGESMHESEEGRD. The disordered stretch occupies residues 1–21; sequence MKVEGGESMHESEEGRDVPNG.

This is an uncharacterized protein from Bacillus thuringiensis subsp. kurstaki.